A 1635-amino-acid polypeptide reads, in one-letter code: U3 small nucleolar RNA-associated protein 10 (1635 aa).

The tract at residues 781 to 803 (TTSMDAPSDESTKRRRRSSSSTV) is disordered. Transmembrane regions (helical) follow at residues 1141–1161 (PELL…TVAG) and 1288–1308 (IALS…SFMV).

Belongs to the HEATR1/UTP10 family. In terms of assembly, component of the ribosomal small subunit (SSU) processome.

The protein resides in the nucleus. It localises to the nucleolus. Its subcellular location is the membrane. In terms of biological role, involved in nucleolar processing of pre-18S ribosomal RNA. Involved in ribosome biosynthesis. The chain is U3 small nucleolar RNA-associated protein 10 from Yarrowia lipolytica (strain CLIB 122 / E 150) (Yeast).